A 31-amino-acid chain; its full sequence is Nemertide alpha-4 (31 aa).

Disulfide bonds link cysteine 2-cysteine 16, cysteine 9-cysteine 20, and cysteine 15-cysteine 26. 4-hydroxyproline occurs at positions 28 and 29.

This sequence belongs to the nemertide family. As to expression, confined to the epidermis and to the mucus layer.

It localises to the secreted. Functionally, potent toxin, demonstrating strong inhibitory effects on insect sodium channels (Nav) and reduced activity on mammalian sodium channels. Potently inhibits inactivation of insect sodium channels of B.germanica (BgNav1) (EC(50)=11.1 nM). Also delays the inactivation of most mammalian Nav (human Nav1.1/SCN1A; EC(50)=92 nM, rat Nav1.2/SCN2A; EC(50)=134.2 nM, rat Nav1.3/SCN3A; EC(50)=12.9 nM, rat Nav1.4/SCN4A; EC(50)=14.6 nM, human Nav1.5/SCN5A; EC(50)=27.8 nM, mouse Nav1.6/SCN8A; EC(50)=123.6 nM, human Nav1.9/SCN9A; EC(50)=80.5 nM). Inactivation is completely prevented by a concentration of 1 uM, resulting in sustained, non-inactivating currents. In addition, the toxin significantly enhances the recovery from inactivation, and the open state is not required for the toxin to interact with the channel. In vivo, injection into brine shrimp (Artemia salina) stops movement or causes death after 24 hours (EC(50)=0.4 uM). In Lineus sanguineus (Ribbon worm), this protein is Nemertide alpha-4.